Here is an 849-residue protein sequence, read N- to C-terminus: Alanine--tRNA ligase (849 aa).

Zn(2+) contacts are provided by His-551, His-555, Cys-653, and His-657.

The protein belongs to the class-II aminoacyl-tRNA synthetase family. The cofactor is Zn(2+).

It is found in the cytoplasm. The catalysed reaction is tRNA(Ala) + L-alanine + ATP = L-alanyl-tRNA(Ala) + AMP + diphosphate. Its function is as follows. Catalyzes the attachment of alanine to tRNA(Ala) in a two-step reaction: alanine is first activated by ATP to form Ala-AMP and then transferred to the acceptor end of tRNA(Ala). Also edits incorrectly charged Ser-tRNA(Ala) and Gly-tRNA(Ala) via its editing domain. This is Alanine--tRNA ligase from Sulfurimonas denitrificans (strain ATCC 33889 / DSM 1251) (Thiomicrospira denitrificans (strain ATCC 33889 / DSM 1251)).